Consider the following 249-residue polypeptide: Mediator of RNA polymerase II transcription subunit 19 (249 aa).

Disordered stretches follow at residues 1-68 (MEGF…SSRR) and 178-249 (QPPK…SGLR). The span at 9–18 (AASEPSSIPS) shows a compositional bias: low complexity. The segment covering 45–56 (VPGPPLPIPPPL) has biased composition (pro residues). Composition is skewed to basic residues over residues 179–190 (PPKKKNKKHKQS) and 221–233 (RRKK…KKSR).

It belongs to the Mediator complex subunit 19 family. Component of the Mediator complex.

It localises to the nucleus. Functionally, component of the Mediator complex, a coactivator involved in the regulated transcription of nearly all RNA polymerase II-dependent genes. Mediator functions as a bridge to convey information from gene-specific regulatory proteins to the basal RNA polymerase II transcription machinery. Mediator is recruited to promoters by direct interactions with regulatory proteins and serves as a scaffold for the assembly of a functional preinitiation complex with RNA polymerase II and the general transcription factors. This Xenopus tropicalis (Western clawed frog) protein is Mediator of RNA polymerase II transcription subunit 19 (med19).